The sequence spans 79 residues: Translational regulator CsrA (79 aa).

It belongs to the CsrA/RsmA family. Homodimer; the beta-strands of each monomer intercalate to form a hydrophobic core, while the alpha-helices form wings that extend away from the core.

The protein localises to the cytoplasm. In terms of biological role, a translational regulator that binds mRNA to regulate translation initiation and/or mRNA stability. Usually binds in the 5'-UTR at or near the Shine-Dalgarno sequence preventing ribosome-binding, thus repressing translation. Its main target seems to be the major flagellin gene, while its function is anatagonized by FliW. This chain is Translational regulator CsrA, found in Syntrophus aciditrophicus (strain SB).